The primary structure comprises 547 residues: CTP synthase (547 aa).

Residues 1–265 (MARFVFITGG…DQAVLDAFSI (265 aa)) are amidoligase domain. Ser13 provides a ligand contact to CTP. Ser13 is a binding site for UTP. Residues 14 to 19 (SLGKGL) and Asp71 contribute to the ATP site. 2 residues coordinate Mg(2+): Asp71 and Glu139. Residues 146 to 148 (DIE), 186 to 191 (KTKPTQ), and Lys222 each bind CTP. UTP is bound by residues 186–191 (KTKPTQ) and Lys222. The Glutamine amidotransferase type-1 domain maps to 291–546 (NVAIVGKYTQ…VRAAKEVSRL (256 aa)). Gly353 contributes to the L-glutamine binding site. Residue Cys380 is the Nucleophile; for glutamine hydrolysis of the active site. L-glutamine contacts are provided by residues 381–384 (LGMQ), Glu404, and Arg474. Active-site residues include His519 and Glu521.

This sequence belongs to the CTP synthase family. Homotetramer.

It carries out the reaction UTP + L-glutamine + ATP + H2O = CTP + L-glutamate + ADP + phosphate + 2 H(+). It catalyses the reaction L-glutamine + H2O = L-glutamate + NH4(+). The enzyme catalyses UTP + NH4(+) + ATP = CTP + ADP + phosphate + 2 H(+). Its pathway is pyrimidine metabolism; CTP biosynthesis via de novo pathway; CTP from UDP: step 2/2. Its activity is regulated as follows. Allosterically activated by GTP, when glutamine is the substrate; GTP has no effect on the reaction when ammonia is the substrate. The allosteric effector GTP functions by stabilizing the protein conformation that binds the tetrahedral intermediate(s) formed during glutamine hydrolysis. Inhibited by the product CTP, via allosteric rather than competitive inhibition. Functionally, catalyzes the ATP-dependent amination of UTP to CTP with either L-glutamine or ammonia as the source of nitrogen. Regulates intracellular CTP levels through interactions with the four ribonucleotide triphosphates. The chain is CTP synthase from Dinoroseobacter shibae (strain DSM 16493 / NCIMB 14021 / DFL 12).